Consider the following 563-residue polypeptide: Cystathionine gamma-synthase-like protein ankD (563 aa).

A disordered region spans residues 1-37 (MGELGPASAQHGSDSISFSGSYTQPLGAPQPPNEPHA). Over residues 10–24 (QHGSDSISFSGSYTQ) the composition is skewed to polar residues.

It belongs to the trans-sulfuration enzymes family. MET7 subfamily. It depends on pyridoxal 5'-phosphate as a cofactor.

The enzyme catalyses cyclo(L-arginyl-(Z)-dehydro-3,4-dihydroxytyrosyl) + O-acetyl-L-homoserine = cyclo(L-arginyl-(Z)-dehydro-4-O-homoseryl-tyrosyl) + acetate + H(+). It functions in the pathway secondary metabolite biosynthesis. Cystathionine gamma-synthase-like protein; part of the ank cluster that mediates the biosynthesis of NK13650 C, a highly modified cyclo-arginine-tyrosine dipeptide. AnkD catalyzes the attachment of L-homoserine moiety using O-acetyl-L-homoserine as co-substrate. Within the pathway, the cyclodipeptide synthase ankA acts as the scaffold-generating enzyme and is responsible for formation of the cyclo-Arg-Tyr diketopiperazine (cRY) from L-Arg and L-Tyr. The ankA product cRY is desaturated by the cytochrome P450 monooxygenase ankB to yield a dehydro-cyclodipeptide intermediate. The FAD-dependent monooxygenase ankC then installs the m-OH, ankD catalyzes the attachment of L-homoserine, and ankE ligates citrate to the ankD product to yield NK13650 B. The O-methyltransferase ankF is responsible for methylation of the C-17 phenol group of NK13650 B to produce NK13650 D. Amidation of NK13650 D with L-Asp by ankG then leads to the production of NK13650 C, whereas amidation of NK13650 B produces NK13650 A. This Aspergillus thermomutatus (Neosartorya pseudofischeri) protein is Cystathionine gamma-synthase-like protein ankD.